A 215-amino-acid chain; its full sequence is UPF0502 protein Shal_1801 (215 aa).

This sequence belongs to the UPF0502 family.

In Shewanella halifaxensis (strain HAW-EB4), this protein is UPF0502 protein Shal_1801.